We begin with the raw amino-acid sequence, 388 residues long: Succinate--CoA ligase [ADP-forming] subunit beta (388 aa).

Residues 9-245 (KELLAKYGLP…KSQENERELK (237 aa)) enclose the ATP-grasp domain. ATP is bound by residues lysine 46, 53–55 (GRG), glutamate 100, tyrosine 103, and glutamate 108. Mg(2+)-binding residues include asparagine 200 and aspartate 214. Substrate is bound by residues asparagine 265 and 322–324 (GIV).

This sequence belongs to the succinate/malate CoA ligase beta subunit family. Heterotetramer of two alpha and two beta subunits. The cofactor is Mg(2+).

The catalysed reaction is succinate + ATP + CoA = succinyl-CoA + ADP + phosphate. It carries out the reaction GTP + succinate + CoA = succinyl-CoA + GDP + phosphate. The protein operates within carbohydrate metabolism; tricarboxylic acid cycle; succinate from succinyl-CoA (ligase route): step 1/1. In terms of biological role, succinyl-CoA synthetase functions in the citric acid cycle (TCA), coupling the hydrolysis of succinyl-CoA to the synthesis of either ATP or GTP and thus represents the only step of substrate-level phosphorylation in the TCA. The beta subunit provides nucleotide specificity of the enzyme and binds the substrate succinate, while the binding sites for coenzyme A and phosphate are found in the alpha subunit. The sequence is that of Succinate--CoA ligase [ADP-forming] subunit beta from Laribacter hongkongensis (strain HLHK9).